We begin with the raw amino-acid sequence, 110 residues long: NADH-quinone oxidoreductase subunit K (110 aa).

Helical transmembrane passes span 13-33 (LNHY…GLFM), 41-61 (ILMS…AFSV), and 73-93 (IIIL…LLIY).

The protein belongs to the complex I subunit 4L family. In terms of assembly, NDH-1 is composed of 14 different subunits. Subunits NuoA, H, J, K, L, M, N constitute the membrane sector of the complex.

It is found in the cell inner membrane. It catalyses the reaction a quinone + NADH + 5 H(+)(in) = a quinol + NAD(+) + 4 H(+)(out). NDH-1 shuttles electrons from NADH, via FMN and iron-sulfur (Fe-S) centers, to quinones in the respiratory chain. The immediate electron acceptor for the enzyme in this species is believed to be ubiquinone. Couples the redox reaction to proton translocation (for every two electrons transferred, four hydrogen ions are translocated across the cytoplasmic membrane), and thus conserves the redox energy in a proton gradient. The sequence is that of NADH-quinone oxidoreductase subunit K from Rickettsia typhi (strain ATCC VR-144 / Wilmington).